The following is a 354-amino-acid chain: Protein RecA (354 aa).

Residue 65-72 (GPESSGKT) participates in ATP binding.

It belongs to the RecA family.

The protein resides in the cytoplasm. Can catalyze the hydrolysis of ATP in the presence of single-stranded DNA, the ATP-dependent uptake of single-stranded DNA by duplex DNA, and the ATP-dependent hybridization of homologous single-stranded DNAs. It interacts with LexA causing its activation and leading to its autocatalytic cleavage. This chain is Protein RecA, found in Aeromonas hydrophila subsp. hydrophila (strain ATCC 7966 / DSM 30187 / BCRC 13018 / CCUG 14551 / JCM 1027 / KCTC 2358 / NCIMB 9240 / NCTC 8049).